A 435-amino-acid chain; its full sequence is Asparagine--tRNA ligase (435 aa).

This sequence belongs to the class-II aminoacyl-tRNA synthetase family. Homodimer.

The protein resides in the cytoplasm. It catalyses the reaction tRNA(Asn) + L-asparagine + ATP = L-asparaginyl-tRNA(Asn) + AMP + diphosphate + H(+). This is Asparagine--tRNA ligase from Leptospira interrogans serogroup Icterohaemorrhagiae serovar Lai (strain 56601).